A 144-amino-acid chain; its full sequence is Superoxide dismutase [Mn], mitochondrial (144 aa).

Mn(2+) is bound by residues H10, H58, and D143.

The protein belongs to the iron/manganese superoxide dismutase family. Homotetramer. Requires Mn(2+) as cofactor.

The protein localises to the mitochondrion matrix. It catalyses the reaction 2 superoxide + 2 H(+) = H2O2 + O2. Its function is as follows. Destroys superoxide anion radicals which are normally produced within the cells and which are toxic to biological systems. The polypeptide is Superoxide dismutase [Mn], mitochondrial (Petromyzon marinus (Sea lamprey)).